Reading from the N-terminus, the 735-residue chain is ATP-dependent DNA helicase Hel308 (735 aa).

ATP is bound by residues Q32 and 50 to 57 (APTGSGKT). The Helicase ATP-binding domain occupies 37-201 (QAGVEKGENL…WIGGKIVESS (165 aa)). Positions 146 to 149 (DEIH) match the DEAH box motif. Residues 235 to 431 (DLDLAAEAIE…GLRGLRHFIL (197 aa)) enclose the Helicase C-terminal domain.

The protein belongs to the helicase family. Hel308 subfamily. As to quaternary structure, monomer.

It carries out the reaction Couples ATP hydrolysis with the unwinding of duplex DNA by translocating in the 3'-5' direction.. The enzyme catalyses ATP + H2O = ADP + phosphate + H(+). In terms of biological role, DNA-dependent ATPase and 3'-5' DNA helicase that may be involved in repair of stalled replication forks. This Aeropyrum pernix (strain ATCC 700893 / DSM 11879 / JCM 9820 / NBRC 100138 / K1) protein is ATP-dependent DNA helicase Hel308.